The primary structure comprises 415 residues: Serine hydroxymethyltransferase 1 (415 aa).

(6S)-5,6,7,8-tetrahydrofolate is bound by residues Leu122 and 126–128 (GHL). Residue Lys230 is modified to N6-(pyridoxal phosphate)lysine.

This sequence belongs to the SHMT family. In terms of assembly, homodimer. The cofactor is pyridoxal 5'-phosphate.

Its subcellular location is the cytoplasm. It carries out the reaction (6R)-5,10-methylene-5,6,7,8-tetrahydrofolate + glycine + H2O = (6S)-5,6,7,8-tetrahydrofolate + L-serine. Its pathway is one-carbon metabolism; tetrahydrofolate interconversion. It functions in the pathway amino-acid biosynthesis; glycine biosynthesis; glycine from L-serine: step 1/1. Its function is as follows. Catalyzes the reversible interconversion of serine and glycine with tetrahydrofolate (THF) serving as the one-carbon carrier. This reaction serves as the major source of one-carbon groups required for the biosynthesis of purines, thymidylate, methionine, and other important biomolecules. Also exhibits THF-independent aldolase activity toward beta-hydroxyamino acids, producing glycine and aldehydes, via a retro-aldol mechanism. This is Serine hydroxymethyltransferase 1 from Ralstonia nicotianae (strain ATCC BAA-1114 / GMI1000) (Ralstonia solanacearum).